The chain runs to 458 residues: uncharacterized protein (458 aa).

Disordered stretches follow at residues 339-397 (GTGY…ARIL) and 434-458 (YNSE…EDDC). 2 stretches are compositionally biased toward acidic residues: residues 344–390 (SDSD…EEEP) and 436–458 (SEDE…EDDC).

This is an uncharacterized protein from Invertebrate iridescent virus 3 (IIV-3).